A 906-amino-acid polypeptide reads, in one-letter code: Protein translocase subunit SecA (906 aa).

ATP is bound by residues Gln-87, 105 to 109, and Asp-512; that span reads GEGKT. The segment at 839 to 896 is disordered; that stretch reads LEEQQRQQSEAAPRTYTHATAESQLADEEAAGEEGHTTFVRDEQKIGRNDPCPCGSGK. Over residues 871 to 886 the composition is skewed to basic and acidic residues; it reads EEGHTTFVRDEQKIGR. Zn(2+) is bound by residues Cys-890, Cys-892, Cys-901, and His-902.

The protein belongs to the SecA family. Monomer and homodimer. Part of the essential Sec protein translocation apparatus which comprises SecA, SecYEG and auxiliary proteins SecDF-YajC and YidC. The cofactor is Zn(2+).

It localises to the cell inner membrane. The protein resides in the cytoplasm. The enzyme catalyses ATP + H2O + cellular proteinSide 1 = ADP + phosphate + cellular proteinSide 2.. Functionally, part of the Sec protein translocase complex. Interacts with the SecYEG preprotein conducting channel. Has a central role in coupling the hydrolysis of ATP to the transfer of proteins into and across the cell membrane, serving both as a receptor for the preprotein-SecB complex and as an ATP-driven molecular motor driving the stepwise translocation of polypeptide chains across the membrane. In Aeromonas salmonicida (strain A449), this protein is Protein translocase subunit SecA.